A 301-amino-acid chain; its full sequence is Bifunctional protein FolD (301 aa).

Residues 166 to 168 (GKS), S191, and I232 each bind NADP(+).

It belongs to the tetrahydrofolate dehydrogenase/cyclohydrolase family. Homodimer.

The catalysed reaction is (6R)-5,10-methylene-5,6,7,8-tetrahydrofolate + NADP(+) = (6R)-5,10-methenyltetrahydrofolate + NADPH. The enzyme catalyses (6R)-5,10-methenyltetrahydrofolate + H2O = (6R)-10-formyltetrahydrofolate + H(+). Its pathway is one-carbon metabolism; tetrahydrofolate interconversion. Catalyzes the oxidation of 5,10-methylenetetrahydrofolate to 5,10-methenyltetrahydrofolate and then the hydrolysis of 5,10-methenyltetrahydrofolate to 10-formyltetrahydrofolate. The protein is Bifunctional protein FolD of Orientia tsutsugamushi (strain Boryong) (Rickettsia tsutsugamushi).